Consider the following 318-residue polypeptide: 1-aminocyclopropane-1-carboxylate oxidase 1 (318 aa).

Residues 153–254 form the Fe2OG dioxygenase domain; it reads PTFGTKVSNY…RMSIASFYNP (102 aa). Residues His177, Asp179, and His234 each contribute to the Fe cation site.

It belongs to the iron/ascorbate-dependent oxidoreductase family. Fe cation is required as a cofactor. In terms of tissue distribution, fruit.

The catalysed reaction is 1-aminocyclopropane-1-carboxylate + L-ascorbate + O2 = ethene + L-dehydroascorbate + hydrogen cyanide + CO2 + 2 H2O. It functions in the pathway alkene biosynthesis; ethylene biosynthesis via S-adenosyl-L-methionine; ethylene from S-adenosyl-L-methionine: step 2/2. In Cucumis melo (Muskmelon), this protein is 1-aminocyclopropane-1-carboxylate oxidase 1 (ACO1).